A 308-amino-acid polypeptide reads, in one-letter code: 50 kDa gamma-zein (308 aa).

Residues 1 to 19 (MKLVLVVLAFIALVSSVSC) form the signal peptide. Residues 27-159 (CGQQQSHEQQ…QPQQPQQYQQ (133 aa)) are disordered. Positions 55 to 119 (HHQQQQHQQQ…QHHQQSQGHV (65 aa)) are enriched in low complexity. Residues 120–129 (QQHEQSHEQH) are compositionally biased toward basic and acidic residues. The span at 130–159 (QGQSHEQQHQQQFQGHDKQQQPQQPQQYQQ) shows a compositional bias: low complexity. A lipid anchor (GPI-anchor amidated cysteine) is attached at cysteine 286. A propeptide spans 287-308 (GLYHSYYQNNPCSSNDISGVCN) (removed in mature form).

It belongs to the gliadin/glutenin family. As to quaternary structure, interacts with OP10 (via N-terminus).

Its subcellular location is the cell membrane. Its function is as follows. Zeins are major seed storage proteins. The sequence is that of 50 kDa gamma-zein from Zea mays (Maize).